A 56-amino-acid polypeptide reads, in one-letter code: Large ribosomal subunit protein bL32A (56 aa).

The segment at 1-56 (MAVPARRTSKAKKNKRRTHKGLTAPGLSRDSETGEYRMSHRISPDGTYKGRTIIEK) is disordered. Positions 7 to 20 (RTSKAKKNKRRTHK) are enriched in basic residues. Residues 29-38 (RDSETGEYRM) show a composition bias toward basic and acidic residues.

It belongs to the bacterial ribosomal protein bL32 family.

In Listeria innocua serovar 6a (strain ATCC BAA-680 / CLIP 11262), this protein is Large ribosomal subunit protein bL32A (rpmF1).